Reading from the N-terminus, the 369-residue chain is Terpene cyclase DEP1 (369 aa).

8 consecutive transmembrane segments (helical) span residues 9-29 (FFYL…FNGM), 82-102 (LLFF…LIES), 118-138 (AMVL…LYLV), 157-177 (ALLV…VPAW), 190-210 (IALF…LASI), 234-254 (LVLA…GALI), 298-318 (LFSQ…SHLL), and 342-362 (LVYL…SFAL).

It belongs to the membrane-bound ascI terpene cyclase family.

The protein resides in the membrane. Its pathway is polyketide biosynthesis. Its function is as follows. Part of the gene cluster that mediates the biosynthesis of depudecin, a highly oxidized eleven-carbon linear polyketide that acts as a histone deacetylase (HDAC) inhibitor and makes a small contribution to pathogenesis. The reducing polyketide synthase DEP5 is the central enzyme in depudecin biosynthesis by yielding the backbone polyketide chain. The monooxygenases DEP2 and DEP4, as well as the uncharacterized protein DEP1, then act as tailoring enzymes to modify the intermediate polyketide chain into depudecin. The sequence is that of Terpene cyclase DEP1 from Alternaria brassicicola (Dark leaf spot agent).